The sequence spans 423 residues: Ornithine cyclodeaminase (423 aa).

NAD(+) is bound by residues N241, A242, D320, T352, M353, L354, H355, D373, D396, and V397.

Belongs to the AgrE/ArgZ ornithine cyclodeaminase family. NAD(+) is required as a cofactor.

It catalyses the reaction L-ornithine = L-proline + NH4(+). Catalyzes the conversion of ornithine to proline, with the release of ammonia. The sequence is that of Ornithine cyclodeaminase from Methanocaldococcus jannaschii (strain ATCC 43067 / DSM 2661 / JAL-1 / JCM 10045 / NBRC 100440) (Methanococcus jannaschii).